Here is a 913-residue protein sequence, read N- to C-terminus: Eukaryotic translation initiation factor 3 subunit C (913 aa).

Positions 1–22 (MSRFFANGSDSESESSEEEVQA) are disordered. The segment covering 11-20 (SESESSEEEV) has biased composition (acidic residues). Phosphoserine occurs at positions 34, 165, 177, and 186. A disordered region spans residues 157–285 (FREAPDQESD…KRAEDDEDGE (129 aa)). Acidic residues predominate over residues 162–171 (DQESDVEEGE). Over residues 172-184 (GEPHDSDGDRAGA) the composition is skewed to basic and acidic residues. Residues 214–239 (DEDDSDDSIDWDSDTESETESSEDEN) show a composition bias toward acidic residues. Basic and acidic residues predominate over residues 244 to 263 (MRERFLKRTTEKEDKDDDKR). Basic residues predominate over residues 264–276 (KDKRKEQKHKVRK). The region spanning 645–821 (FHMHINLELL…ETVVMHRSEP (177 aa)) is the PCI domain. A disordered region spans residues 856-913 (RGNMGNRDRGYNRNQNNQGGNWGGQRRDNRNQRNRNQRGHHKQQQQQQQQQVQTIEEE). The span at 887 to 898 (QRNRNQRGHHKQ) shows a compositional bias: basic residues.

The protein belongs to the eIF-3 subunit C family. Component of the eukaryotic translation initiation factor 3 (eIF-3) complex. The eIF-3 complex interacts with pix.

The protein resides in the cytoplasm. Functionally, component of the eukaryotic translation initiation factor 3 (eIF-3) complex, which is involved in protein synthesis of a specialized repertoire of mRNAs and, together with other initiation factors, stimulates binding of mRNA and methionyl-tRNAi to the 40S ribosome. The eIF-3 complex specifically targets and initiates translation of a subset of mRNAs involved in cell proliferation. This is Eukaryotic translation initiation factor 3 subunit C from Drosophila mojavensis (Fruit fly).